The following is a 391-amino-acid chain: ATP phosphoribosyltransferase regulatory subunit (391 aa).

The protein belongs to the class-II aminoacyl-tRNA synthetase family. HisZ subfamily. Heteromultimer composed of HisG and HisZ subunits.

It localises to the cytoplasm. It participates in amino-acid biosynthesis; L-histidine biosynthesis; L-histidine from 5-phospho-alpha-D-ribose 1-diphosphate: step 1/9. Its function is as follows. Required for the first step of histidine biosynthesis. May allow the feedback regulation of ATP phosphoribosyltransferase activity by histidine. The protein is ATP phosphoribosyltransferase regulatory subunit of Bacillus licheniformis (strain ATCC 14580 / DSM 13 / JCM 2505 / CCUG 7422 / NBRC 12200 / NCIMB 9375 / NCTC 10341 / NRRL NRS-1264 / Gibson 46).